We begin with the raw amino-acid sequence, 863 residues long: Leucine--tRNA ligase (863 aa).

The 'HIGH' region signature appears at 42 to 52; sequence PYPSGRLHMGH. Residues 622-626 carry the 'KMSKS' region motif; that stretch reads KMSKS. Lys625 is a binding site for ATP.

The protein belongs to the class-I aminoacyl-tRNA synthetase family.

It is found in the cytoplasm. It carries out the reaction tRNA(Leu) + L-leucine + ATP = L-leucyl-tRNA(Leu) + AMP + diphosphate. The protein is Leucine--tRNA ligase of Shewanella sediminis (strain HAW-EB3).